The following is a 304-amino-acid chain: MDPTSSSSSALRWKILRQALLRRSDSQSQTETKRISRKATQGFNLIPCQVVDSSPQSDKSREASVCYTLPITGSPKLYLTQRVDNCSDLNDFEISNRYNIDNTGLVCQWPSEEVLAYFCKSQPERFRGKRVIELGSGYGLAGLVIAAATEASEVVISDGNPQVVNYIKRNIETNSMAFGGTSVKAMELHWNQHQLSELTNTFDIIVASDCTFFKEFHKDLARTIKMLLKAKKASEALFFSPKRGDSLEKFMKEIKDIGLHYILTENYDAQVWKRHETLVKGDEAWPNYDKNHCYPLLIQITNQI.

The protein belongs to the class I-like SAM-binding methyltransferase superfamily. CLNMT methyltransferase family. In terms of assembly, monomer. Expressed in discreet spatial and tissue-specific patterns including root tips, leaves-tips, floral buds, stamens, hydathodes, stigma, anther, siliques, apical meristems and germinating seeds. Also observed at high levels in the root stele region.

The protein localises to the cytoplasm. The protein resides in the nucleus. The catalysed reaction is [calmodulin]-L-lysine + S-adenosyl-L-methionine = [calmodulin]-N(6)-methyl-L-lysine + S-adenosyl-L-homocysteine + H(+). Functionally, catalyzes the trimethylation of calmodulin. Regulates roots development probably by modulating auxin signaling responses. May be involved in gravitropism. Involved in abscisic acid (ABA)-mediated and abiotic stress responses, including salt (NaCl), cold, drought and heat stresses. This Arabidopsis thaliana (Mouse-ear cress) protein is Calmodulin-lysine N-methyltransferase.